The primary structure comprises 222 residues: 23kDa protein (222 aa).

Polar residues predominate over residues 1–12 (MEPHDQSGSTTR). Positions 1 to 21 (MEPHDQSGSTTRQLDEIRDRR) are disordered.

Functionally, may act as a regulatory factor during viral transcription. The sequence is that of 23kDa protein from Indian citrus ringspot virus (isolate Kinnow mandarin/India/K1/1996) (ICRSV).